The following is a 160-amino-acid chain: Putative UPF0479 protein YLR466C-A (160 aa).

Transmembrane regions (helical) follow at residues 39 to 59 (IVFC…KVLQ) and 136 to 156 (VPMI…ISQH).

Belongs to the UPF0479 family.

Its subcellular location is the membrane. This is Putative UPF0479 protein YLR466C-A from Saccharomyces cerevisiae (strain ATCC 204508 / S288c) (Baker's yeast).